An 876-amino-acid polypeptide reads, in one-letter code: SED5-binding protein 2 (876 aa).

Ser-51 is modified (phosphoserine). Positions 164–189 (CRRCRSYMNPFVVFINQGRKWQCNIC) are zinc finger-like. Residues 300-324 (VSDEDDEESDGEEEDEDEEEEDVDN) are compositionally biased toward acidic residues. The interval 300-326 (VSDEDDEESDGEEEDEDEEEEDVDNSE) is disordered.

The protein belongs to the SEC23/SEC24 family. SEC24 subfamily. As to quaternary structure, COPII is composed of at least five proteins: the SEC23/24 complex, the SEC13/31 complex and SAR1. Interacts with GRH1.

It localises to the cytoplasm. It is found in the golgi apparatus membrane. The protein localises to the endoplasmic reticulum membrane. Component of the COPII coat, that covers ER-derived vesicles involved in transport from the endoplasmic reticulum to the Golgi apparatus. COPII acts in the cytoplasm to promote the transport of secretory, plasma membrane, and vacuolar proteins from the endoplasmic reticulum to the Golgi complex. This is SED5-binding protein 2 (SFB2) from Saccharomyces cerevisiae (strain ATCC 204508 / S288c) (Baker's yeast).